Reading from the N-terminus, the 264-residue chain is Thymidylate synthase (264 aa).

R21 is a dUMP binding site. H51 serves as a coordination point for (6R)-5,10-methylene-5,6,7,8-tetrahydrofolate. 126 to 127 contacts dUMP; it reads RR. C146 functions as the Nucleophile in the catalytic mechanism. Residues 166–169, N177, and 207–209 each bind dUMP; these read RSAD and HLY. D169 provides a ligand contact to (6R)-5,10-methylene-5,6,7,8-tetrahydrofolate. A263 lines the (6R)-5,10-methylene-5,6,7,8-tetrahydrofolate pocket.

Belongs to the thymidylate synthase family. Bacterial-type ThyA subfamily. In terms of assembly, homodimer.

It localises to the cytoplasm. The enzyme catalyses dUMP + (6R)-5,10-methylene-5,6,7,8-tetrahydrofolate = 7,8-dihydrofolate + dTMP. The protein operates within pyrimidine metabolism; dTTP biosynthesis. Functionally, catalyzes the reductive methylation of 2'-deoxyuridine-5'-monophosphate (dUMP) to 2'-deoxythymidine-5'-monophosphate (dTMP) while utilizing 5,10-methylenetetrahydrofolate (mTHF) as the methyl donor and reductant in the reaction, yielding dihydrofolate (DHF) as a by-product. This enzymatic reaction provides an intracellular de novo source of dTMP, an essential precursor for DNA biosynthesis. The sequence is that of Thymidylate synthase from Rhizobium etli (strain ATCC 51251 / DSM 11541 / JCM 21823 / NBRC 15573 / CFN 42).